Reading from the N-terminus, the 498-residue chain is ATP synthase subunit beta, chloroplastic (498 aa).

T6 carries the phosphothreonine modification. At S13 the chain carries Phosphoserine. G172–T179 lines the ATP pocket.

This sequence belongs to the ATPase alpha/beta chains family. F-type ATPases have 2 components, CF(1) - the catalytic core - and CF(0) - the membrane proton channel. CF(1) has five subunits: alpha(3), beta(3), gamma(1), delta(1), epsilon(1). CF(0) has four main subunits: a(1), b(1), b'(1) and c(9-12).

The protein resides in the plastid. It is found in the chloroplast thylakoid membrane. The enzyme catalyses ATP + H2O + 4 H(+)(in) = ADP + phosphate + 5 H(+)(out). Produces ATP from ADP in the presence of a proton gradient across the membrane. The catalytic sites are hosted primarily by the beta subunits. The sequence is that of ATP synthase subunit beta, chloroplastic from Capsella bursa-pastoris (Shepherd's purse).